We begin with the raw amino-acid sequence, 423 residues long: AP-1 complex subunit mu-1 (423 aa).

Ser-2 carries the N-acetylserine modification. Phosphothreonine is present on residues Thr-152, Thr-154, and Thr-223. Residues 168–421 (KNEVFLDVIE…ITQNGDYQLR (254 aa)) enclose the MHD domain.

This sequence belongs to the adaptor complexes medium subunit family. Adaptor protein complex 1 (AP-1) is a heterotetramer composed of two large adaptins (gamma-type subunit AP1G1 and beta-type subunit AP1B1), a medium adaptin (mu-type subunit AP1M1 or AP1M2) and a small adaptin (sigma-type subunit AP1S1 or AP1S2 or AP1S3). Interacts with MARCHF11. Phosphorylation of membrane-bound AP1M1/AP1M2 increases its affinity for sorting signals.

It is found in the cytoplasmic vesicle. Its subcellular location is the clathrin-coated vesicle membrane. The protein resides in the golgi apparatus. Its function is as follows. Subunit of clathrin-associated adaptor protein complex 1 that plays a role in protein sorting in the trans-Golgi network (TGN) and endosomes. The AP complexes mediate the recruitment of clathrin to membranes and the recognition of sorting signals within the cytosolic tails of transmembrane cargo molecules. This Rattus norvegicus (Rat) protein is AP-1 complex subunit mu-1.